Reading from the N-terminus, the 483-residue chain is Zinc metalloproteinase/disintegrin (483 aa).

The first 20 residues, 1–20 (MIQVLLVTLCLAAFPYQGNS), serve as a signal peptide directing secretion. A propeptide spanning residues 21 to 191 (IILESGNVND…KASQLNLTPE (171 aa)) is cleaved from the precursor. The Peptidase M12B domain occupies 198 to 394 (RYIELVVVAD…HNPQCMLNEP (197 aa)). Residues Glu201 and Asp285 each contribute to the Ca(2+) site. 3 disulfide bridges follow: Cys309-Cys389, Cys349-Cys373, and Cys351-Cys356. A Zn(2+)-binding site is contributed by His334. Residue Glu335 is part of the active site. The Zn(2+) site is built by His338 and His344. The Ca(2+) site is built by Cys389 and Asn392. A propeptide spanning residues 395–414 (LRTDIVSTPVSGNELWETGE) is cleaved from the precursor. One can recognise a Disintegrin domain in the interval 402-483 (TPVSGNELWE…AGCPRNPFHA (82 aa)). Disulfide bonds link Cys425–Cys448, Cys439–Cys445, Cys444–Cys469, and Cys457–Cys476. The Cell attachment site; atypical (KGD) motif lies at 461–463 (KGD).

Belongs to the venom metalloproteinase (M12B) family. P-II subfamily. P-IIe sub-subfamily. In terms of assembly, heterodimer with piscivostatin-alpha; disulfide-linked (disintegrin). Requires Zn(2+) as cofactor. Expressed by the venom gland.

The protein resides in the secreted. Impairs hemostasis in the envenomed animal. Its function is as follows. Inhibits platelet aggregation induced by ADP. Acts by inhibiting fibrinogen interaction with platelet receptors GPIIb/GPIIIa (ITGA2B/ITGB3). Also inhibits platelet aggregate dissociation in human platelet-rich plasma. The polypeptide is Zinc metalloproteinase/disintegrin (Agkistrodon piscivorus piscivorus (Eastern cottonmouth)).